Here is a 549-residue protein sequence, read N- to C-terminus: Protein wntless homolog (549 aa).

Residues 1–34 (MAGGAVIENLSNRKLFVIFAGLLVIQIMFFLIGA) form the signal peptide. Residues 36–236 (YAPSPSSYME…RLIEIHQNGG (201 aa)) are Lumenal-facing. The chain crosses the membrane as a helical span at residues 237–257 (FTLVWLWTKTFMTPVVAICLW). Over 258-275 (WYYNRINQLARNPLLLER) the chain is Cytoplasmic. Residues 276-296 (AILLLGLSLVILDFPIEWISL) form a helical membrane-spanning segment. The Lumenal portion of the chain corresponds to 297-310 (TYRIPFLLLISDLR). A helical transmembrane segment spans residues 311–331 (QGLFYTVLFSFWLIFAGEHLI). Residues 332–345 (DDNTRNNLKSYRFN) are Cytoplasmic-facing. Residues 346-366 (LSFIITASLGLLIYDLIERGI) traverse the membrane as a helical segment. The Lumenal segment spans residues 367-383 (QLYDPFYSVWSSPTGSQ). The chain crosses the membrane as a helical span at residues 384–404 (IAYFAIFISAISTVAYFIFLF). The Cytoplasmic segment spans residues 405–439 (FKIARVWSTIKSKRSAQIYQTSENRRLKVEGVIYR). The chain crosses the membrane as a helical span at residues 440 to 460 (FKFLMLFTLLCSAFTIAAYFM). Topologically, residues 461-483 (KQYGEAQLHGDEARDGFLTGSTS) are lumenal. Residues 484 to 504 (AFFTGAFGMCNIYVLLLLAMY) traverse the membrane as a helical segment. The Cytoplasmic portion of the chain corresponds to 505–549 (APSHKHYRGASQLIDENDDDEIMEDPSNQHTESNAMTTFLKPSTD). Residues 524 to 549 (DEIMEDPSNQHTESNAMTTFLKPSTD) form a disordered region. Positions 530–549 (PSNQHTESNAMTTFLKPSTD) are enriched in polar residues.

It belongs to the wntless family. Expressed in the tail hypodermis, stomatointestinal muscle, the mesoblast cell M and its descendants, CAN neurons, the developing vulva, the pharynx and the pharyngeal intestinal valve.

It is found in the cell membrane. It localises to the early endosome membrane. Its subcellular location is the golgi apparatus membrane. The protein resides in the basal cell membrane. The protein localises to the late endosome membrane. Probable sorting receptor which regulates endocytosis and secretion of the wnt ligand egl-20. Recycling of mig-14 from the plasma membrane to the Golgi apparatus by the retromer complex is essential for its function. Its endosomal trafficking is regulated by its association with sorting nexin snx-3 on early endosomes and the mtm-6/mtm-9 myotubularin complex. Required in embryonic development for endoderm specification and the correct positioning and orientation of the mitotic spindles and division planes in blastomere cells. Functions during vulval development, playing a role in vulval precursor cell fate specification. During development, specifically regulates the migration of HSN neurons, the left Q neuroblast (QL) and its descendants and the distal tip cells of the gonads. Positioning of Q neuroblasts may be both dependent and independent of hox gene mab-5. Involved in establishing ALM and PLM neuronal cell polarity. The protein is Protein wntless homolog of Caenorhabditis elegans.